We begin with the raw amino-acid sequence, 332 residues long: MSSLGKLLKLTLLGILLSFSCKFVFGYFNVNQLFDHEFIKVFPNFKGNVEAKIKYPTVVYAIGDIHGDFPNALDVLSAAGVVSPVFPHEWTAGNATLVQTGDVVDRGPDTRKLFRWFNDLHKQAEKHGGRVVRLLGNHEFMNAKGDWRYVHPGDKASYPEPSEENRIIDWGHSGEIGNLLLSEYNVTYKDNTTGSHFMHAGLSPEWAYREETVNELGKELLSHFMSREKIPEYLEDFWAIEGPMWYRGLAQLSEEEACEVALNVTKTLNVNRLVMGHTPQFHGIVSRCEGRILLIDTGLCSAYAGERAVLRISQNDTDSIVEAVYRGKIVKL.

Residues 1–26 (MSSLGKLLKLTLLGILLSFSCKFVFG) form the signal peptide.

The protein localises to the endoplasmic reticulum. This is an uncharacterized protein from Schizosaccharomyces pombe (strain 972 / ATCC 24843) (Fission yeast).